Here is a 427-residue protein sequence, read N- to C-terminus: MKRLTGTNEKISNILYQEQLELSKENLDVEATVREIIEKVKEEGDEALRAYSEKFDHVVLSELHVSDQVVNEAFDKIDKDVLTALENAKANIESYHKQQLKGGFEDQPSQGVLRGQLIRPIERVGVYVPGGTAAYPSSVLMNVIPAKIAGVKEIIMITPPQEHFVPAILVAAKLAGVDKIYQVGGAQGIAALAYGTQTLPKVDKITGPGNIFVATAKKLVYGVVGIDMIAGPSEIGVIADSTANPVYVAADLLSQAEHDVHARAILVTNSAELADAVELEIEKQLQTLPRQAIARPSIENNGRIIIAQDVESMFELMNLVAPEHLEIAIDKAYDYLERVQNAGSIFLGHYTSEPIGDYYAGANHVLPTTATSRFSSALGVHDFVKRIQYTQYSKAAVNAAEKDITTLAYAEGLQAHARAIEVRNDKN.

Positions 127, 187, and 210 each coordinate NAD(+). Substrate-binding residues include Ser-233, Gln-255, and His-258. Zn(2+) is bound by residues Gln-255 and His-258. Active-site proton acceptor residues include Glu-323 and His-324. Substrate-binding residues include His-324, Asp-357, Glu-411, and His-416. Asp-357 provides a ligand contact to Zn(2+). Zn(2+) is bound at residue His-416.

This sequence belongs to the histidinol dehydrogenase family. The cofactor is Zn(2+).

It catalyses the reaction L-histidinol + 2 NAD(+) + H2O = L-histidine + 2 NADH + 3 H(+). The protein operates within amino-acid biosynthesis; L-histidine biosynthesis; L-histidine from 5-phospho-alpha-D-ribose 1-diphosphate: step 9/9. In terms of biological role, catalyzes the sequential NAD-dependent oxidations of L-histidinol to L-histidinaldehyde and then to L-histidine. The polypeptide is Histidinol dehydrogenase (Streptococcus mutans serotype c (strain ATCC 700610 / UA159)).